Reading from the N-terminus, the 191-residue chain is Flagellar transcriptional regulator FlhC (191 aa).

Positions 139, 142, 159, and 162 each coordinate Zn(2+).

Belongs to the FlhC family. Heterohexamer composed of two FlhC and four FlhD subunits. Each FlhC binds a FlhD dimer, forming a heterotrimer, and a hexamer assembles by dimerization of two heterotrimers. Requires Zn(2+) as cofactor.

The protein localises to the cytoplasm. Its function is as follows. Functions in complex with FlhD as a master transcriptional regulator that regulates transcription of several flagellar and non-flagellar operons by binding to their promoter region. Activates expression of class 2 flagellar genes, including fliA, which is a flagellum-specific sigma factor that turns on the class 3 genes. Also regulates genes whose products function in a variety of physiological pathways. The sequence is that of Flagellar transcriptional regulator FlhC from Enterobacter cloacae subsp. cloacae (strain ATCC 13047 / DSM 30054 / NBRC 13535 / NCTC 10005 / WDCM 00083 / NCDC 279-56).